We begin with the raw amino-acid sequence, 1043 residues long: Beta-klotho (1043 aa).

Residues 1–994 (MKTGCAAGSP…ICSFLVEKKP (994 aa)) are Extracellular-facing. 2 glycosyl hydrolase-1 regions span residues 77–506 (LYDT…DNGF) and 515–965 (MKGR…SSGL). N-linked (GlcNAc...) asparagine glycosylation is found at Asn-84, Asn-122, Asn-161, Asn-211, Asn-262, Asn-308, Asn-389, Asn-552, Asn-609, Asn-700, Asn-704, and Asn-837. Residues 995-1015 (LIFFGCCFISTLAVLLSITVF) traverse the membrane as a helical segment. Over 1016–1043 (HHQKRRKFQKARNLQNIPLKKGHSRVFS) the chain is Cytoplasmic.

It belongs to the glycosyl hydrolase 1 family. Klotho subfamily. In terms of assembly, interacts with FGF19; this interaction is direct. Interacts (via C-terminus) with FGF21; this interaction is direct. Interacts with FGFR1 and FGFR4. In terms of tissue distribution, present in liver, muscle and white adipose tissue, but not in kidney (at protein level). Expressed in liver and pancreas, and at lower levels in skin, stomach, skeletal muscle, small intestine and lung.

It is found in the cell membrane. Contributes to the transcriptional repression of cholesterol 7-alpha-hydroxylase (CYP7A1), the rate-limiting enzyme in bile acid synthesis. Probably inactive as a glycosidase. Increases the ability of FGFR1 and FGFR4 to bind FGF21. This chain is Beta-klotho (Klb), found in Mus musculus (Mouse).